The following is a 581-amino-acid chain: Arginine--tRNA ligase (581 aa).

The 'HIGH' region signature appears at 126-136; it reads PNLAKEMHVGH.

Belongs to the class-I aminoacyl-tRNA synthetase family. In terms of assembly, monomer.

Its subcellular location is the cytoplasm. The catalysed reaction is tRNA(Arg) + L-arginine + ATP = L-arginyl-tRNA(Arg) + AMP + diphosphate. The protein is Arginine--tRNA ligase of Shewanella halifaxensis (strain HAW-EB4).